Reading from the N-terminus, the 331-residue chain is Flagellar P-ring protein (331 aa).

The first 25 residues, 1–25, serve as a signal peptide directing secretion; it reads MKKRLAVLLVIVLTITFSFSVTTRI.

This sequence belongs to the FlgI family. As to quaternary structure, the basal body constitutes a major portion of the flagellar organelle and consists of four rings (L,P,S, and M) mounted on a central rod.

The protein resides in the periplasm. It localises to the bacterial flagellum basal body. In terms of biological role, assembles around the rod to form the L-ring and probably protects the motor/basal body from shearing forces during rotation. This Thermotoga petrophila (strain ATCC BAA-488 / DSM 13995 / JCM 10881 / RKU-1) protein is Flagellar P-ring protein.